Reading from the N-terminus, the 1049-residue chain is Probable ATP-dependent permease (1049 aa).

The N-terminal stretch at 1-25 is a signal peptide; the sequence is MGSHRRYLYYSILSFLLLSCSVVLA. Topologically, residues 26–324 are lumenal; sequence KQDKTPFFEG…KDPTVSWQGK (299 aa). Residues Asn-50, Asn-114, Asn-165, and Asn-221 are each glycosylated (N-linked (GlcNAc...) asparagine). A helical transmembrane segment spans residues 325 to 345; it reads LVLALTAVMVLALFTFATFYI. Residues 346–463 lie on the Cytoplasmic side of the membrane; it reads SKSPLFRNGL…ISMDRKSFSK (118 aa). The ABC transporter domain occupies 384 to 631; it reads LSFENITYSV…LRNEGYICPD (248 aa). 423–430 contributes to the ATP binding site; sequence GGSGAGKT. The helical transmembrane segment at 464-481 threads the bilayer; sequence IIGFVDQDDFLLPTLTVF. The Lumenal portion of the chain corresponds to 482-793; the sequence is ETVLNSALLR…SFKNMYRNPK (312 aa). Phosphoserine occurs at positions 659 and 702. An ABC transmembrane type-2 domain is found at 793–1044; it reads KLLLGNYLLT…IMGYLALKWI (252 aa). A helical transmembrane segment spans residues 794–814; that stretch reads LLLGNYLLTILLSLFLGTLYY. At 815-828 the chain is on the cytoplasmic side; the sequence is NVSNDISGFQNRMG. Residues 829 to 849 traverse the membrane as a helical segment; it reads LFFFILTYFGFVTFTGLSSFA. Residues 850 to 877 are Lumenal-facing; that stretch reads LERIIFIKERSNNYYSPLAYYISKIMSE. A helical transmembrane segment spans residues 878 to 898; sequence VVPLRVVPPILLSLIVYPMTG. Residues 899 to 909 lie on the Cytoplasmic side of the membrane; it reads LNMKDNAFFKC. A helical transmembrane segment spans residues 910–930; sequence IGILILFNLGISLEILTIGII. The Lumenal portion of the chain corresponds to 931 to 937; the sequence is FEDLNNS. Asn-935 carries N-linked (GlcNAc...) asparagine glycosylation. The chain crosses the membrane as a helical span at residues 938 to 958; sequence IILSVLVLLGSLLFSGLFINT. Residues 959–1000 lie on the Cytoplasmic side of the membrane; it reads KNITNVAFKYLKNFSVFYYAYESLLINEVKTLMLKERKYGLN. Residues 1001–1021 traverse the membrane as a helical segment; the sequence is IEVPGATILSTFGFVVQNLVF. Over 1022 to 1024 the chain is Lumenal; it reads DIK. A helical transmembrane segment spans residues 1025–1045; the sequence is ILALFNVVFLIMGYLALKWIV. Residues 1046–1049 lie on the Cytoplasmic side of the membrane; it reads VEQK.

The protein belongs to the ABC transporter superfamily. ABCG family. Eye pigment precursor importer (TC 3.A.1.204) subfamily.

It localises to the endoplasmic reticulum membrane. This chain is Probable ATP-dependent permease (ADP1), found in Saccharomyces cerevisiae (strain ATCC 204508 / S288c) (Baker's yeast).